Here is a 316-residue protein sequence, read N- to C-terminus: Aspartate carbamoyltransferase catalytic subunit (316 aa).

Positions 58 and 59 each coordinate carbamoyl phosphate. Lys86 is an L-aspartate binding site. Arg108, His136, and Gln139 together coordinate carbamoyl phosphate. Arg169 and Arg223 together coordinate L-aspartate. The carbamoyl phosphate site is built by Gly264 and Pro265.

This sequence belongs to the aspartate/ornithine carbamoyltransferase superfamily. ATCase family. In terms of assembly, heterododecamer (2C3:3R2) of six catalytic PyrB chains organized as two trimers (C3), and six regulatory PyrI chains organized as three dimers (R2).

It catalyses the reaction carbamoyl phosphate + L-aspartate = N-carbamoyl-L-aspartate + phosphate + H(+). It participates in pyrimidine metabolism; UMP biosynthesis via de novo pathway; (S)-dihydroorotate from bicarbonate: step 2/3. Functionally, catalyzes the condensation of carbamoyl phosphate and aspartate to form carbamoyl aspartate and inorganic phosphate, the committed step in the de novo pyrimidine nucleotide biosynthesis pathway. The protein is Aspartate carbamoyltransferase catalytic subunit of Dinoroseobacter shibae (strain DSM 16493 / NCIMB 14021 / DFL 12).